Consider the following 113-residue polypeptide: Ribulose bisphosphate carboxylase small subunit (113 aa).

It belongs to the RuBisCO small chain family. As to quaternary structure, heterohexadecamer of 8 large and 8 small subunits. Forms a CsoS2-CsoS1-RuBisCO complex.

Its subcellular location is the carboxysome. In terms of biological role, ruBisCO catalyzes two reactions: the carboxylation of D-ribulose 1,5-bisphosphate, the primary event in carbon dioxide fixation, as well as the oxidative fragmentation of the pentose substrate in the photorespiration process. Both reactions occur simultaneously and in competition at the same active site. Although the small subunit is not catalytic it is essential for maximal activity. There are estimated to be 152 RuBisCO holoenzymes per carboxysome. The polypeptide is Ribulose bisphosphate carboxylase small subunit (Prochlorococcus marinus subsp. pastoris (strain CCMP1986 / NIES-2087 / MED4)).